A 199-amino-acid polypeptide reads, in one-letter code: Recombination protein RecR (199 aa).

A C4-type zinc finger spans residues 59-74; the sequence is CLNCGNVGTSDICALC. The Toprim domain occupies 82-176; that stretch reads GELCVVEDVA…KLTSLAQGVP (95 aa).

It belongs to the RecR family.

Its function is as follows. May play a role in DNA repair. It seems to be involved in an RecBC-independent recombinational process of DNA repair. It may act with RecF and RecO. The polypeptide is Recombination protein RecR (Ruegeria sp. (strain TM1040) (Silicibacter sp.)).